We begin with the raw amino-acid sequence, 106 residues long: Small ribosomal subunit protein bS16 (106 aa).

Belongs to the bacterial ribosomal protein bS16 family.

The polypeptide is Small ribosomal subunit protein bS16 (Protochlamydia amoebophila (strain UWE25)).